The following is a 442-amino-acid chain: Glutamyl-tRNA(Gln) amidotransferase subunit A (442 aa).

Active-site charge relay system residues include lysine 50 and serine 125. Serine 149 serves as the catalytic Acyl-ester intermediate.

Belongs to the amidase family. GatA subfamily. In terms of assembly, heterotrimer of A, B and C subunits.

The enzyme catalyses L-glutamyl-tRNA(Gln) + L-glutamine + ATP + H2O = L-glutaminyl-tRNA(Gln) + L-glutamate + ADP + phosphate + H(+). Functionally, allows the formation of correctly charged Gln-tRNA(Gln) through the transamidation of misacylated Glu-tRNA(Gln) in organisms which lack glutaminyl-tRNA synthetase. The reaction takes place in the presence of glutamine and ATP through an activated gamma-phospho-Glu-tRNA(Gln). This Nitratiruptor sp. (strain SB155-2) protein is Glutamyl-tRNA(Gln) amidotransferase subunit A.